A 421-amino-acid polypeptide reads, in one-letter code: UDP-N-acetylglucosamine 1-carboxyvinyltransferase (421 aa).

22–23 (KN) provides a ligand contact to phosphoenolpyruvate. R93 lines the UDP-N-acetyl-alpha-D-glucosamine pocket. The active-site Proton donor is C117. At C117 the chain carries 2-(S-cysteinyl)pyruvic acid O-phosphothioketal. Residues 122 to 126 (RPVDL), D308, and I330 contribute to the UDP-N-acetyl-alpha-D-glucosamine site.

It belongs to the EPSP synthase family. MurA subfamily.

The protein localises to the cytoplasm. The enzyme catalyses phosphoenolpyruvate + UDP-N-acetyl-alpha-D-glucosamine = UDP-N-acetyl-3-O-(1-carboxyvinyl)-alpha-D-glucosamine + phosphate. It participates in cell wall biogenesis; peptidoglycan biosynthesis. Its function is as follows. Cell wall formation. Adds enolpyruvyl to UDP-N-acetylglucosamine. This Pseudomonas putida (strain W619) protein is UDP-N-acetylglucosamine 1-carboxyvinyltransferase.